The following is a 577-amino-acid chain: MVQSAPASEIAALILRGFDDYREQFREITDGARARFEQAQWQEAQRASAQRINLYEEKVAETVAGLRAGLADSELLDVERWPIIKSAYIAQIDLRLDDELAETWFNSIFCGLFSHDNISDGTMFVHTTRPSLRAHARAPYTRTYRPGGDLRQALEKIFDDYRFDVPYDDRERDLERIDALLHSNLPDWVCKDPDLAIELIGSVFYRNKGAYLVGRLFTPDEQWPLVFPLLHREGHGIQFDTVITDEAEVSIIFSFTRSYFMVDVPVPAELVAFLKRLLPGKHLAELYTSIGFYKQGKSEFYRALINHLATTDDRFVMAPGVRGMVMSVFTLPGFNTVFKIIKDRFNPSKSVDHATVIQKYQLVKNHDRVGRLADTQQFADFRFPVSKFEPECLAELLEVAPSTVVMEGDVVLIRHCWTERRMTPLNIYLENASEAQTREALNDYGLAIKQLAAANIFPGDMLLKNFGVTRHGRVVFYDYDEICYLTEVNFRYIPEPRFPEDEMSSEPWYSVGPNDVFPEEFPRFLFVDLNQRRLFAKLHGNLYDAKYWQGLQEQIREGKVIDVFPYRRQETPEQLLK.

ATP is bound by residues 318–324 (APGVRGM) and Lys-339. The active site involves Asp-374.

Belongs to the AceK family.

It localises to the cytoplasm. It catalyses the reaction L-seryl-[isocitrate dehydrogenase] + ATP = O-phospho-L-seryl-[isocitrate dehydrogenase] + ADP + H(+). Functionally, bifunctional enzyme which can phosphorylate or dephosphorylate isocitrate dehydrogenase (IDH) on a specific serine residue. This is a regulatory mechanism which enables bacteria to bypass the Krebs cycle via the glyoxylate shunt in response to the source of carbon. When bacteria are grown on glucose, IDH is fully active and unphosphorylated, but when grown on acetate or ethanol, the activity of IDH declines drastically concomitant with its phosphorylation. The protein is Isocitrate dehydrogenase kinase/phosphatase of Pseudomonas aeruginosa (strain LESB58).